The chain runs to 282 residues: uncharacterized protein (282 aa).

The protein to M.tuberculosis Rv2161c and Rv3079c.

This is an uncharacterized protein from Mycobacterium tuberculosis (strain CDC 1551 / Oshkosh).